The chain runs to 1251 residues: Probable transcription factor TDA9 (1251 aa).

C2H2-type zinc fingers lie at residues 61-83 (FLCHICTRGFVRQEHLKRHQRAH) and 89-112 (FLCVFCGRCFARRDLVLRHQHKLH). Disordered regions lie at residues 160-227 (VQLK…KSKR) and 398-428 (NHSHPDSRHNNSSSGINYSNNKNNNESIEKS). Over residues 164–173 (KAAKEKKNGK) the composition is skewed to basic residues. Residues 183–202 (YGANNHSTDVSPSVGNSSTP) are compositionally biased toward polar residues. Over residues 407–428 (NNSSSGINYSNNKNNNESIEKS) the composition is skewed to low complexity. Phosphoserine is present on residues Ser-527 and Ser-603. The span at 617–634 (SLTPSLTTQTATTQSGPG) shows a compositional bias: low complexity. The disordered stretch occupies residues 617-636 (SLTPSLTTQTATTQSGPGWT).

It belongs to the RSF2/TDA9 family.

It localises to the nucleus. Functionally, DNA-binding protein that acts probably as a transcription factor. The polypeptide is Probable transcription factor TDA9 (TDA9) (Saccharomyces cerevisiae (strain ATCC 204508 / S288c) (Baker's yeast)).